A 289-amino-acid chain; its full sequence is HTH-type transcriptional regulator SoxR (289 aa).

The HTH lysR-type domain maps to 1–58 (MEIKDLQIFQKVVEYGSVSKAAKSLNYVQSYVTVRIQKLEEELQTELFHRSSRGMVLN). A DNA-binding region (H-T-H motif) is located at residues 18–37 (VSKAAKSLNYVQSYVTVRIQ).

It belongs to the LysR transcriptional regulatory family.

Functionally, transcriptional repressor of soxA gene expression. This Arthrobacter sp. (strain TE1826) protein is HTH-type transcriptional regulator SoxR (soxR).